Here is a 153-residue protein sequence, read N- to C-terminus: Interleukin-17A (153 aa).

A signal peptide spans 1–23; the sequence is MTPVRSSSLSLLLLLSLVALVKA. The N-linked (GlcNAc...) asparagine glycan is linked to N53. 2 cysteine pairs are disulfide-bonded: C92–C142 and C97–C144.

This sequence belongs to the IL-17 family. In terms of assembly, homodimer. Forms complexes with IL17RA and IL17RC receptors with 2:1 binding stoichiometry: two receptor chains for one interleukin molecule. IL17A homodimer preferentially drives the formation of IL17RA-IL17RC heterodimeric receptor complex. IL17A homodimer adopts an asymmetrical ternary structure with one IL17RA molecule, allowing for high affinity interactions of one IL17A monomer with one IL17RA molecule (via D1 and D2 domains), while disfavoring binding of a second IL17RA molecule on the other IL17A monomer. Heterodimer with IL17F. IL17A-IL17F forms complexes with IL17RA-IL17RC, but with lower affinity when compared to IL17A homodimer. IL17RA and IL17RC chains cannot distinguish between IL17A and IL17F molecules, potentially enabling the formation of topologically distinct complexes. In terms of tissue distribution, highly expressed in adult heart, skin, and intestinal tissues, such as jejunum and ileum.

Its subcellular location is the secreted. Its function is as follows. Effector cytokine of innate and adaptive immune system involved in antimicrobial host defense and maintenance of tissue integrity. Signals via IL17RA-IL17RC heterodimeric receptor complex, triggering homotypic interaction of IL17RA and IL17RC chains with TRAF3IP2 adapter. This leads to downstream TRAF6-mediated activation of NF-kappa-B and MAPkinase pathways ultimately resulting in transcriptional activation of cytokines, chemokines, antimicrobial peptides and matrix metalloproteinases, with potential strong immune inflammation. Plays an important role in connecting T cell-mediated adaptive immunity and acute inflammatory response to destroy extracellular bacteria and fungi. As a signature effector cytokine of T-helper 17 cells (Th17), primarily induces neutrophil activation and recruitment at infection and inflammatory sites. In airway epithelium, mediates neutrophil chemotaxis via induction of CXCL1 and CXCL5 chemokines. In secondary lymphoid organs, contributes to germinal center formation by regulating the chemotactic response of B cells to CXCL12 and CXCL13, enhancing retention of B cells within the germinal centers, B cell somatic hypermutation rate and selection toward plasma cells. Effector cytokine of a subset of gamma-delta T cells that functions as part of an inflammatory circuit downstream IL1B, TLR2 and IL23A-IL12B to promote neutrophil recruitment for efficient bacterial clearance. Effector cytokine of innate immune cells including invariant natural killer cell (iNKT) and group 3 innate lymphoid cells that mediate initial neutrophilic inflammation. Involved in the maintenance of the integrity of epithelial barriers during homeostasis and pathogen infection. Upon acute injury, has a direct role in epithelial barrier formation by regulating OCLN localization and tight junction biogenesis. As part of the mucosal immune response induced by commensal bacteria, enhances host's ability to resist pathogenic bacterial and fungal infections by promoting neutrophil recruitment and antimicrobial peptides release. In synergy with IL17F, mediates the production of antimicrobial beta-defensins DEFB1, DEFB103A, and DEFB104A by mucosal epithelial cells, limiting the entry of microbes through the epithelial barriers. Involved in antiviral host defense through various mechanisms. Enhances immunity against West Nile virus by promoting T cell cytotoxicity. May play a beneficial role in influenza A virus (H5N1) infection by enhancing B cell recruitment and immune response in the lung. Contributes to influenza A virus (H1N1) clearance by driving the differentiation of B-1a B cells, providing for production of virus-specific IgM antibodies at first line of host defense. This is Interleukin-17A (IL17A) from Sus scrofa (Pig).